The chain runs to 159 residues: Regulator of G-protein signaling 13 (159 aa).

Residues 34–150 (SFENLMATKY…LKSEMYQKLL (117 aa)) enclose the RGS domain.

In terms of biological role, inhibits signal transduction by increasing the GTPase activity of G protein alpha subunits thereby driving them into their inactive GDP-bound form. Binds to both G(i)-alpha and G(q)-alpha. This chain is Regulator of G-protein signaling 13 (RGS13), found in Homo sapiens (Human).